The following is a 402-amino-acid chain: Enoyl-[acyl-carrier-protein] reductase [NADH] (402 aa).

NAD(+) contacts are provided by residues Gly48–Tyr53, Phe74–Glu75, Asp111–Ala112, and Leu140–Ala141. Tyr226 is a binding site for substrate. Tyr236 (proton donor) is an active-site residue. Residues Lys245 and Val274–Thr276 each bind NAD(+).

Belongs to the TER reductase family. In terms of assembly, monomer.

The enzyme catalyses a 2,3-saturated acyl-[ACP] + NAD(+) = a (2E)-enoyl-[ACP] + NADH + H(+). It functions in the pathway lipid metabolism; fatty acid biosynthesis. Involved in the final reduction of the elongation cycle of fatty acid synthesis (FAS II). Catalyzes the reduction of a carbon-carbon double bond in an enoyl moiety that is covalently linked to an acyl carrier protein (ACP). The protein is Enoyl-[acyl-carrier-protein] reductase [NADH] of Xanthomonas axonopodis pv. citri (strain 306).